Reading from the N-terminus, the 138-residue chain is Protein Rrf1 (138 aa).

The 113-residue stretch at 4–116 (RILVVQEDPD…LLLALVDRAL (113 aa)) folds into the Response regulatory domain. 4-aspartylphosphate is present on residues Asp-13 and Asp-53.

In terms of biological role, may be involved in regulation of gene transcription. Belongs to the family of response regulators, and members of this family involved in the regulation of gene transcription are two-domain proteins. This protein contains only the N-terminal phosphorylation domain and not the C-terminal DNA-binding domain but it may bind to Rrf2 protein and the latter may bind to DNA. This is Protein Rrf1 (rrf1) from Nitratidesulfovibrio vulgaris (strain ATCC 29579 / DSM 644 / CCUG 34227 / NCIMB 8303 / VKM B-1760 / Hildenborough) (Desulfovibrio vulgaris).